Consider the following 80-residue polypeptide: RNA-binding protein Hfq (80 aa).

One can recognise a Sm domain in the interval 10-70 (DLFLNTVRKQ…ISTIMPGQPL (61 aa)).

It belongs to the Hfq family. As to quaternary structure, homohexamer.

Functionally, RNA chaperone that binds small regulatory RNA (sRNAs) and mRNAs to facilitate mRNA translational regulation in response to envelope stress, environmental stress and changes in metabolite concentrations. Also binds with high specificity to tRNAs. The chain is RNA-binding protein Hfq from Rhizobium meliloti (strain 1021) (Ensifer meliloti).